The sequence spans 270 residues: tRNA pseudouridine synthase A (270 aa).

Catalysis depends on D60, which acts as the Nucleophile. The tract at residues 107-111 is RNA binding; sequence FHARF. Y118 serves as a coordination point for substrate. An interaction with tRNA region spans residues 168 to 172; the sequence is QCQSR.

This sequence belongs to the tRNA pseudouridine synthase TruA family. As to quaternary structure, homodimer.

It carries out the reaction uridine(38/39/40) in tRNA = pseudouridine(38/39/40) in tRNA. Formation of pseudouridine at positions 38, 39 and 40 in the anticodon stem and loop of transfer RNAs. This chain is tRNA pseudouridine synthase A, found in Escherichia coli (strain K12 / DH10B).